The chain runs to 215 residues: [PSI+] inducibility protein 3 (215 aa).

Residue Ser2 is modified to N-acetylserine. A phosphoserine mark is found at Ser52 and Ser55. One can recognise an SH3 domain in the interval 54 to 113 (ASLEYVEALYQFDPQQDGDLGLKPGDKVQLLEKLSPEWYKGSCNGRTGIFPANYVKPAFS). Residue Lys80 forms a Glycyl lysine isopeptide (Lys-Gly) (interchain with G-Cter in ubiquitin) linkage. The disordered stretch occupies residues 114 to 189 (GSNGPSNLPP…HQSSHSHLKS (76 aa)). Residues 124–127 (PPQY) carry the PY motif motif.

It belongs to the LSB1 family. In terms of assembly, interacts with LAS17, RSP5 and SUP35. Ubiquitinated by RSP5. Ubiquitination reduces the protein abundance and its prion-inducing ability.

It localises to the cytoplasm. The protein resides in the nucleus. The protein localises to the cytoskeleton. It is found in the actin patch. Overproduction promotes the de novo induction of the [PSI+] prion form of SUP35. The prion-inducing effect depends on the association with the actin cytoskeleton. Also implicated in prion maintenance during heat stress. The polypeptide is [PSI+] inducibility protein 3 (PIN3) (Saccharomyces cerevisiae (strain ATCC 204508 / S288c) (Baker's yeast)).